The following is a 113-amino-acid chain: UPF0060 membrane protein Arth_4423 (113 aa).

Transmembrane regions (helical) follow at residues 7 to 27 (VLLFILAAVAEIGGAWLVWQA), 33 to 53 (AWWWAGLGIIALGLYGFVATL), 62 to 82 (ILAAYGGVFVAGSLVWGMVFD), and 91 to 111 (VIGSVICLVGVAVIMFAPRGT).

It belongs to the UPF0060 family.

The protein resides in the cell membrane. The protein is UPF0060 membrane protein Arth_4423 of Arthrobacter sp. (strain FB24).